The primary structure comprises 285 residues: Shikimate dehydrogenase (NADP(+)) (285 aa).

Shikimate-binding positions include 21–23 (SRS) and T68. K72 serves as the catalytic Proton acceptor. NADP(+) is bound at residue E83. The shikimate site is built by N92 and D107. NADP(+) contacts are provided by residues 132–136 (GAGGS), 156–161 (NRTMER), and L221. Y223 is a binding site for shikimate. G244 serves as a coordination point for NADP(+).

The protein belongs to the shikimate dehydrogenase family. Homodimer.

The catalysed reaction is shikimate + NADP(+) = 3-dehydroshikimate + NADPH + H(+). It participates in metabolic intermediate biosynthesis; chorismate biosynthesis; chorismate from D-erythrose 4-phosphate and phosphoenolpyruvate: step 4/7. Involved in the biosynthesis of the chorismate, which leads to the biosynthesis of aromatic amino acids. Catalyzes the reversible NADPH linked reduction of 3-dehydroshikimate (DHSA) to yield shikimate (SA). This chain is Shikimate dehydrogenase (NADP(+)), found in Nitrobacter hamburgensis (strain DSM 10229 / NCIMB 13809 / X14).